The sequence spans 357 residues: DnaJ homolog subfamily C member 25 (357 aa).

The helical transmembrane segment at 19–39 (WLLLAPLLLVPLLVRPAEALV) threads the bilayer. In terms of domain architecture, J spans 48–121 (DCYEVLGVSR…ETRKDYDYML (74 aa)). Helical transmembrane passes span 147–167 (VVIL…WWNS) and 241–261 (LLLF…AWYC).

It belongs to the DNAJC25 family.

It is found in the membrane. The polypeptide is DnaJ homolog subfamily C member 25 (Dnajc25) (Rattus norvegicus (Rat)).